The primary structure comprises 57 residues: Potassium channel toxin alpha-KTx 4.2 (57 aa).

The N-terminal stretch at 1–20 is a signal peptide; that stretch reads MKVLYGILIIFILCSMFYLS. A propeptide spans 21 to 22 (removed by a carboxypeptidase); sequence QE. Cystine bridges form between Cys29/Cys50, Cys35/Cys55, and Cys39/Cys57.

It belongs to the short scorpion toxin superfamily. Potassium channel inhibitor family. Alpha-KTx 04 subfamily. As to expression, expressed by the venom gland.

It is found in the secreted. Its function is as follows. Blocker for small-conductance calcium-activated potassium channels KCa2.2/KCNN2 (Kd=80 nM) and KCa2.3/KCNN3 (Kd=197 nM) and ERG1/Kv11.1/KCNH2 potassium channels (53% inhibition at 5 uM). Has also been shown to inhibit Kv1.1/KCNA1 and Nav1.7/SCN9A with a moderate potency, as well as Kv11.1/KCNH2/ERG1 and Kv1.2/KCNA2 with a low potency. This Tityus serrulatus (Brazilian scorpion) protein is Potassium channel toxin alpha-KTx 4.2.